We begin with the raw amino-acid sequence, 443 residues long: Light-independent protochlorophyllide reductase subunit N (443 aa).

C15, C40, and C99 together coordinate [4Fe-4S] cluster.

It belongs to the BchN/ChlN family. As to quaternary structure, protochlorophyllide reductase is composed of three subunits; BchL, BchN and BchB. Forms a heterotetramer of two BchB and two BchN subunits. [4Fe-4S] cluster is required as a cofactor.

It carries out the reaction chlorophyllide a + oxidized 2[4Fe-4S]-[ferredoxin] + 2 ADP + 2 phosphate = protochlorophyllide a + reduced 2[4Fe-4S]-[ferredoxin] + 2 ATP + 2 H2O. The protein operates within porphyrin-containing compound metabolism; bacteriochlorophyll biosynthesis (light-independent). In terms of biological role, component of the dark-operative protochlorophyllide reductase (DPOR) that uses Mg-ATP and reduced ferredoxin to reduce ring D of protochlorophyllide (Pchlide) to form chlorophyllide a (Chlide). This reaction is light-independent. The NB-protein (BchN-BchB) is the catalytic component of the complex. The polypeptide is Light-independent protochlorophyllide reductase subunit N (Heliobacterium modesticaldum (strain ATCC 51547 / Ice1)).